The primary structure comprises 474 residues: Aspartyl/glutamyl-tRNA(Asn/Gln) amidotransferase subunit B (474 aa).

Belongs to the GatB/GatE family. GatB subfamily. In terms of assembly, heterotrimer of A, B and C subunits.

It carries out the reaction L-glutamyl-tRNA(Gln) + L-glutamine + ATP + H2O = L-glutaminyl-tRNA(Gln) + L-glutamate + ADP + phosphate + H(+). The catalysed reaction is L-aspartyl-tRNA(Asn) + L-glutamine + ATP + H2O = L-asparaginyl-tRNA(Asn) + L-glutamate + ADP + phosphate + 2 H(+). Functionally, allows the formation of correctly charged Asn-tRNA(Asn) or Gln-tRNA(Gln) through the transamidation of misacylated Asp-tRNA(Asn) or Glu-tRNA(Gln) in organisms which lack either or both of asparaginyl-tRNA or glutaminyl-tRNA synthetases. The reaction takes place in the presence of glutamine and ATP through an activated phospho-Asp-tRNA(Asn) or phospho-Glu-tRNA(Gln). This chain is Aspartyl/glutamyl-tRNA(Asn/Gln) amidotransferase subunit B, found in Coprothermobacter proteolyticus (strain ATCC 35245 / DSM 5265 / OCM 4 / BT).